A 560-amino-acid chain; its full sequence is DNA ligase B (560 aa).

The N6-AMP-lysine intermediate role is filled by Lys-128.

This sequence belongs to the NAD-dependent DNA ligase family. LigB subfamily.

The enzyme catalyses NAD(+) + (deoxyribonucleotide)n-3'-hydroxyl + 5'-phospho-(deoxyribonucleotide)m = (deoxyribonucleotide)n+m + AMP + beta-nicotinamide D-nucleotide.. In terms of biological role, catalyzes the formation of phosphodiester linkages between 5'-phosphoryl and 3'-hydroxyl groups in double-stranded DNA using NAD as a coenzyme and as the energy source for the reaction. The protein is DNA ligase B of Azotobacter vinelandii (strain DJ / ATCC BAA-1303).